Here is a 255-residue protein sequence, read N- to C-terminus: Large ribosomal subunit protein uL2 (255 aa).

The segment at 201-229 (YAHPHGGGSHQQGGTPVKKNAPPGQKVGF) is disordered.

The protein belongs to the universal ribosomal protein uL2 family. As to quaternary structure, part of the 50S ribosomal subunit. Forms a bridge to the 30S subunit in the 70S ribosome.

In terms of biological role, one of the primary rRNA binding proteins. Required for association of the 30S and 50S subunits to form the 70S ribosome, for tRNA binding and peptide bond formation. It has been suggested to have peptidyltransferase activity; this is somewhat controversial. Makes several contacts with the 16S rRNA in the 70S ribosome. This chain is Large ribosomal subunit protein uL2, found in Caldivirga maquilingensis (strain ATCC 700844 / DSM 13496 / JCM 10307 / IC-167).